A 161-amino-acid chain; its full sequence is Mediator of RNA polymerase II transcription subunit 31 (161 aa).

A disordered region spans residues 124-161 (GTGVDEQGAQDTQEGEGEQKQNKEEDAQDAQENTESKT).

Belongs to the Mediator complex subunit 31 family. In terms of assembly, component of the Mediator complex.

It localises to the nucleus. Functionally, component of the Mediator complex, a coactivator involved in the regulated transcription of nearly all RNA polymerase II-dependent genes. Mediator functions as a bridge to convey information from gene-specific regulatory proteins to the basal RNA polymerase II transcription machinery. Mediator is recruited to promoters by direct interactions with regulatory proteins and serves as a scaffold for the assembly of a functional preinitiation complex with RNA polymerase II and the general transcription factors. The protein is Mediator of RNA polymerase II transcription subunit 31 (soh1) of Aspergillus clavatus (strain ATCC 1007 / CBS 513.65 / DSM 816 / NCTC 3887 / NRRL 1 / QM 1276 / 107).